A 460-amino-acid chain; its full sequence is Ammonium transporter Rh type C (460 aa).

Residues 1-9 are Cytoplasmic-facing; sequence MAWNTNLRW. A helical transmembrane segment spans residues 10–30; sequence RLPLTCLLLQVIMVILFGVFV. Topologically, residues 31-61 are extracellular; that stretch reads RYDPDADAHWIDERLGRNISSDMDNEFYYRY. Asparagine 48 is a glycosylation site (N-linked (GlcNAc...) asparagine). The chain crosses the membrane as a helical span at residues 62–82; that stretch reads PSFQDVHVMIFVGFGFLMTFL. At 83-86 the chain is on the cytoplasmic side; that stretch reads QRYG. The chain crosses the membrane as a helical span at residues 87 to 107; that stretch reads FSSVGFNFLLAAFGIQWALLM. At 108–125 the chain is on the extracellular side; that stretch reads QGWLHSFHSGYIVLGVEN. A helical transmembrane segment spans residues 126-145; the sequence is LINADFCVGSVCVAFGAVLG. Over 146–151 the chain is Cytoplasmic; that stretch reads KVSPVQ. A helical membrane pass occupies residues 152–174; the sequence is LLIMTLFQVTLFSVNEFILLNLL. The Extracellular portion of the chain corresponds to 175 to 179; that stretch reads EVKDA. The chain crosses the membrane as a helical span at residues 180–200; it reads GGSMTIHTFGAYFGLTVTWIL. Over 201-219 the chain is Cytoplasmic; it reads YRPNLYQSKERQSSVYHSD. Residues 220–240 form a helical membrane-spanning segment; that stretch reads LFAMIGTLFLWMYWPSFNSAV. Over 241–251 the chain is Extracellular; it reads SHHGDAQHRAA. Residues 252–272 form a helical membrane-spanning segment; the sequence is INTYCSLAACVLTSVALSSAL. Topologically, residues 273–285 are cytoplasmic; it reads HKKGKLDMVHIQN. The helical transmembrane segment at 286–306 threads the bilayer; the sequence is ATLAGGVAVGTAAEMMLMPYG. Position 307 (serine 307) is a topological domain, extracellular. A helical transmembrane segment spans residues 308-328; sequence LIVGFICGIISTLGFVYLTPF. The Cytoplasmic segment spans residues 329 to 340; it reads LESRLRIQDTCG. The chain crosses the membrane as a helical span at residues 341 to 361; the sequence is IHNLHGMPGIIGGIVGAVTAA. The Extracellular segment spans residues 362–396; the sequence is SANTQQYGQKGLAHAFDIDATKTTWTASMQGSFQA. A helical membrane pass occupies residues 397–417; sequence AGLFVSLAMALVGGLIVGVIL. Topologically, residues 418–460 are cytoplasmic; that stretch reads KLPFWGQPADENCFEDAIYWEIPEDQKSLVSRSEDPTLRPTEP.

This sequence belongs to the ammonium transporter (TC 2.A.49) family. Rh subfamily. In terms of assembly, homotrimer. Post-translationally, N-glycosylated.

It localises to the cell membrane. The protein localises to the apical cell membrane. The enzyme catalyses NH4(+)(in) = NH4(+)(out). It carries out the reaction methylamine(out) = methylamine(in). It catalyses the reaction CO2(out) = CO2(in). Functionally, ammonium transporter involved in the maintenance of acid-base homeostasis. Transports ammonium and its related derivative methylammonium across the plasma membrane of epithelial cells likely contributing to renal transepithelial ammonia transport and ammonia metabolism. Postulated to primarily mediate an electroneutral bidirectional transport of NH3 ammonia species according to a mechanism that implies interaction of an NH4(+) ion with acidic residues of the pore entry followed by dissociation of NH4(+) into NH3 and H(+). As a result NH3 transits through the central pore and is protonated on the extracellular side reforming NH4(+). May act as a CO2 channel providing for renal acid secretion. In Sus scrofa (Pig), this protein is Ammonium transporter Rh type C (RHCG).